We begin with the raw amino-acid sequence, 246 residues long: Alpha-amylase inhibitor 1 (246 aa).

A signal peptide spans 1-23 (MIMASSKLLSLALFLALLSHANS). N-linked (GlcNAc...) asparagine glycans are attached at residues Asn-35, Asn-88, and Asn-163. Residues 240 to 246 (IVLNKIL) constitute a propeptide that is removed on maturation.

Belongs to the leguminous lectin family. Heterodimer of chain 1 and chain 2. In terms of processing, proteolytic processing yields active form.

Functionally, lectin and alpha-amylase inhibitor. Acts as a defensive protein against insects. This Phaseolus vulgaris (Kidney bean) protein is Alpha-amylase inhibitor 1 (LLP).